The primary structure comprises 429 residues: MKKLLASLLCVLSFQSFAIPVELNNAPVREFVSWYSKTTGKPVIISPDVKGEITVYSADVTKDELPQFFTSVLRANGFDLSPGNPAVVQKFNRNTYEYSDSFSEPVPASSYDGDVPPPTGDFFTKPEIRANLITQTYPVNNVRAKDLAPVIDIFLKGENIAGTKVYPLMGRIFLLVTASASQHKELAAFFPSVDVPRTQVLVESVIFETTASDGFDFSFAAGDPSGSPVAGGINTDRLTSVLSSTGGSFGIFNGNILGLSLKALETSSKSTLLSMPRILTMSGQPGTFTAGQNVPFVTGRVTGEAANVNNPFQTIERHDVGISLKVVPVVTPGGLLIMDVSTNADSISDSQTASDIITNTRSISTTVQLKSGQTVLLGGMVDNRESDSDSSVPWVSKIPLIGALFTSKSSNANKRTLYILIRARVVNLL.

An N-terminal signal peptide occupies residues 1 to 18; the sequence is MKKLLASLLCVLSFQSFA. A helical transmembrane segment spans residues 320-340; that stretch reads VGISLKVVPVVTPGGLLIMDV.

This sequence belongs to the inovirus G4P protein family. In terms of assembly, homomultimer. The channel is composed of 14 G4P subunits that confer a barrel-like structure. Interacts with G1P; this interaction results in a complex that spans the inner an outer host membranes.

The protein resides in the host membrane. Its function is as follows. Acts in the assembly and extrusion of the bacteriophage by forming a channel across the host outer membrane. This channel is just large enough to allow a newly synthesized phage particle to pass through. Extrusion is a process of concomitant assembly and secretion and takes place at specific assembly sites where host inner and outer membranes are in close contacts. This chain is Virion export protein (IV), found in Escherichia coli (Bacteriophage If1).